Reading from the N-terminus, the 284-residue chain is Bifunctional protein FolD (284 aa).

Residues 165–167 (GRG), threonine 192, and valine 233 each bind NADP(+).

It belongs to the tetrahydrofolate dehydrogenase/cyclohydrolase family. In terms of assembly, homodimer.

The enzyme catalyses (6R)-5,10-methylene-5,6,7,8-tetrahydrofolate + NADP(+) = (6R)-5,10-methenyltetrahydrofolate + NADPH. The catalysed reaction is (6R)-5,10-methenyltetrahydrofolate + H2O = (6R)-10-formyltetrahydrofolate + H(+). Its pathway is one-carbon metabolism; tetrahydrofolate interconversion. Functionally, catalyzes the oxidation of 5,10-methylenetetrahydrofolate to 5,10-methenyltetrahydrofolate and then the hydrolysis of 5,10-methenyltetrahydrofolate to 10-formyltetrahydrofolate. This is Bifunctional protein FolD from Corynebacterium efficiens (strain DSM 44549 / YS-314 / AJ 12310 / JCM 11189 / NBRC 100395).